Consider the following 429-residue polypeptide: Light-independent protochlorophyllide reductase subunit N (429 aa).

Residues Cys32, Cys57, and Cys118 each coordinate [4Fe-4S] cluster.

It belongs to the BchN/ChlN family. As to quaternary structure, protochlorophyllide reductase is composed of three subunits; BchL, BchN and BchB. Forms a heterotetramer of two BchB and two BchN subunits. Requires [4Fe-4S] cluster as cofactor.

The catalysed reaction is chlorophyllide a + oxidized 2[4Fe-4S]-[ferredoxin] + 2 ADP + 2 phosphate = protochlorophyllide a + reduced 2[4Fe-4S]-[ferredoxin] + 2 ATP + 2 H2O. It participates in porphyrin-containing compound metabolism; bacteriochlorophyll biosynthesis (light-independent). Its function is as follows. Component of the dark-operative protochlorophyllide reductase (DPOR) that uses Mg-ATP and reduced ferredoxin to reduce ring D of protochlorophyllide (Pchlide) to form chlorophyllide a (Chlide). This reaction is light-independent. The NB-protein (BchN-BchB) is the catalytic component of the complex. The chain is Light-independent protochlorophyllide reductase subunit N from Rhodopseudomonas palustris (strain ATCC BAA-98 / CGA009).